A 412-amino-acid polypeptide reads, in one-letter code: DnaJ homolog subfamily A member 2 (412 aa).

The J domain occupies 8–70 (KLYDILGVPP…EKRELYDRYG (63 aa)). At lysine 39 the chain carries N6-acetyllysine. Residues serine 78 and serine 123 each carry the phosphoserine modification. The CR-type zinc-finger motif lies at 130-214 (GKTTKLQLSK…CEGKKVIKEV (85 aa)). Residue lysine 134 forms a Glycyl lysine isopeptide (Lys-Gly) (interchain with G-Cter in SUMO2) linkage. Zn(2+)-binding residues include cysteine 143 and cysteine 146. A CXXCXGXG motif repeat occupies 143–150 (CSACSGQG). Lysine 152 bears the N6-acetyllysine mark. Cysteine 159, cysteine 162, cysteine 186, cysteine 189, cysteine 202, and cysteine 205 together coordinate Zn(2+). CXXCXGXG motif repeat units lie at residues 159–166 (CSACRGRG), 186–193 (CSDCNGEG), and 202–209 (CKKCEGKK). The segment at 365 to 412 (IGETEEVELQEFDSTRGSGGGQRREAYNDSSDEESSSHHGPGVQCAHQ) is disordered. Tyrosine 391 carries the post-translational modification Phosphotyrosine. Serine 394 and serine 395 each carry phosphoserine. At cysteine 409 the chain carries Cysteine methyl ester. Cysteine 409 carries the S-farnesyl cysteine lipid modification. Positions 410 to 412 (AHQ) are cleaved as a propeptide — removed in mature form.

It localises to the membrane. Its function is as follows. Co-chaperone of Hsc70. Stimulates ATP hydrolysis and the folding of unfolded proteins mediated by HSPA1A/B (in vitro). In Homo sapiens (Human), this protein is DnaJ homolog subfamily A member 2 (DNAJA2).